We begin with the raw amino-acid sequence, 142 residues long: Gonadotropin subunit beta-2 (142 aa).

The first 23 residues, 1 to 23, serve as a signal peptide directing secretion; sequence MLGLHVGTLISLFLCILLEPVEG. 6 disulfide bridges follow: C29-C77, C43-C92, C46-C130, C54-C108, C58-C110, and C113-C120. N-linked (GlcNAc...) asparagine glycosylation occurs at N33.

Belongs to the glycoprotein hormones subunit beta family. In terms of assembly, heterodimer of an alpha and a beta chain.

The protein localises to the secreted. Involved in gametogenesis and steroidogenesis. The chain is Gonadotropin subunit beta-2 (cgbb) from Oncorhynchus keta (Chum salmon).